The following is an 88-amino-acid chain: Small ribosomal subunit protein bS20 (88 aa).

This sequence belongs to the bacterial ribosomal protein bS20 family.

In terms of biological role, binds directly to 16S ribosomal RNA. In Clostridium kluyveri (strain NBRC 12016), this protein is Small ribosomal subunit protein bS20.